The primary structure comprises 477 residues: MTTSSNPPNSAAPNQTSGMWGGRFSEATDAFVAEFTASVQFDQRFYKQDIAGSIAHATMLAKVGVLTEAERDDIIEGLSTIRAEIEAGTFEWRIDLEDVHMNIESRLTQRIGITGKKLHTGRSRNDQVATDIRLYLRDEIDDILGLLERLQKGLLGLAAKNVNTIMPGFTHLQTAQPVTFGHHLLAWFEMLVRDTERLQDCRKRVNRMPLGSAALAGTTYPIDRAYTAELLGFEAVSENSLDAVSDRDFAIEFNAAASLIMMHLSRMSEELILWTSAQFKFVNIPDRFCTGSSIMPQKKNPDVPELIRGKSGRVFGDLISLLTLMKGQPLAYNKDNQEDKEPLFDAIDTVRGSLMAFADMIPALVPNVEIMREAALRGFSTATDLADYLVKKGVAFRDAHEIVGKAVALGVAEEKDLSELTLEQLQQFSDLITADVFDKALTLEASVNARDHIGGTSPKQVEAAIARAHKRLEQLYA.

Belongs to the lyase 1 family. Argininosuccinate lyase subfamily.

Its subcellular location is the cytoplasm. It catalyses the reaction 2-(N(omega)-L-arginino)succinate = fumarate + L-arginine. It participates in amino-acid biosynthesis; L-arginine biosynthesis; L-arginine from L-ornithine and carbamoyl phosphate: step 3/3. The sequence is that of Argininosuccinate lyase from Acinetobacter baumannii (strain ACICU).